The primary structure comprises 148 residues: UPF0591 membrane protein C15E1.02c (148 aa).

3 helical membrane passes run 14 to 34 (AILL…GPLM), 80 to 102 (LLQL…VFGA), and 122 to 142 (ILVK…ALIG).

The protein belongs to the UPF0591 family.

Its subcellular location is the membrane. The polypeptide is UPF0591 membrane protein C15E1.02c (Schizosaccharomyces pombe (strain 972 / ATCC 24843) (Fission yeast)).